Here is a 141-residue protein sequence, read N- to C-terminus: Antifungal protein ginkbilobin-like protein 1 (141 aa).

The first 32 residues, 1 to 32 (MSISSKFQLRSSTSLLLLVALMVVMGMDGAAA), serve as a signal peptide directing secretion. The Gnk2-homologous domain occupies 36–141 (TNFVSSACNT…CFIQYEQHSF (106 aa)). 3 cysteine pairs are disulfide-bonded: Cys-43–Cys-119, Cys-95–Cys-104, and Cys-107–Cys-132. Asn-44 lines the alpha-D-mannopyranose pocket. Alpha-D-mannopyranose-binding residues include Arg-126 and Glu-137.

Its function is as follows. Exerts antifungal activity through its carbohydrate-binding specificity. This chain is Antifungal protein ginkbilobin-like protein 1, found in Picea glauca (White spruce).